Reading from the N-terminus, the 233-residue chain is Large ribosomal subunit protein uL1 (233 aa).

The protein belongs to the universal ribosomal protein uL1 family. Part of the 50S ribosomal subunit.

Its function is as follows. Binds directly to 23S rRNA. The L1 stalk is quite mobile in the ribosome, and is involved in E site tRNA release. In terms of biological role, protein L1 is also a translational repressor protein, it controls the translation of the L11 operon by binding to its mRNA. The polypeptide is Large ribosomal subunit protein uL1 (Trichlorobacter lovleyi (strain ATCC BAA-1151 / DSM 17278 / SZ) (Geobacter lovleyi)).